A 901-amino-acid polypeptide reads, in one-letter code: Pyruvate, phosphate dikinase (901 aa).

The interval 1–321 (MNIAKSIHFL…WLIEQKPVEA (321 aa)) is N-terminal. Residues 322–380 (KSTISLVRLLLDLYEREVVDAEYVVKSVKPGQLNEILHPVIDMTSVTGLKSSQGGIIGV) form a linker 1 region. The interval 381 to 482 (PGAAVGRVYF…TINEGDFVTL (102 aa)) is central. A Phosphoserine; by PDRP1 modification is found at S440. Catalysis depends on H442, which acts as the Tele-phosphohistidine intermediate. The interval 483–522 (NVPYYGESTLYMGAAQLIEPDPETSGLVSFIELAKGFVRS) is linker 2. A C-terminal region spans residues 523 to 901 (FHVRANADSP…SAKSGGRRAR (379 aa)). Substrate is bound by residues R550, R606, E750, G771, T772, N773, and D774. Position 750 (E750) interacts with Mg(2+). D774 contributes to the Mg(2+) binding site. The active-site Proton donor is the C835. The segment at 879 to 901 (EKEGRKPAWRGRSSAKSGGRRAR) is disordered.

Belongs to the PEP-utilizing enzyme family. As to quaternary structure, homodimer. It depends on Mg(2+) as a cofactor. In terms of processing, phosphorylation of Ser-440 in the dark inactivates the enzyme. Dephosphorylation upon light stimulation reactivates the enzyme.

It catalyses the reaction pyruvate + phosphate + ATP = phosphoenolpyruvate + AMP + diphosphate + H(+). Activated by light-induced dephosphorylation. Inhibited by dark-induced phosphorylation. Both reactions are catalyzed by PDRP1. In terms of biological role, catalyzes the reversible phosphorylation of pyruvate and phosphate. This is Pyruvate, phosphate dikinase (ppdK) from Treponema pallidum (strain Nichols).